Consider the following 251-residue polypeptide: Segregation and condensation protein A (251 aa).

Belongs to the ScpA family. In terms of assembly, component of a cohesin-like complex composed of ScpA, ScpB and the Smc homodimer, in which ScpA and ScpB bind to the head domain of Smc. The presence of the three proteins is required for the association of the complex with DNA.

The protein localises to the cytoplasm. In terms of biological role, participates in chromosomal partition during cell division. May act via the formation of a condensin-like complex containing Smc and ScpB that pull DNA away from mid-cell into both cell halves. This chain is Segregation and condensation protein A, found in Clostridium botulinum (strain Eklund 17B / Type B).